The primary structure comprises 131 residues: SPbeta prophage-derived uncharacterized protein YosD (131 aa).

The disordered stretch occupies residues 102-131 (EHNNKKAKNNDTQNQRQIKTSWWQRLTKKD). The span at 111–125 (NDTQNQRQIKTSWWQ) shows a compositional bias: polar residues.

This chain is SPbeta prophage-derived uncharacterized protein YosD (yosD), found in Bacillus subtilis (strain 168).